Consider the following 521-residue polypeptide: Aspartic proteinase yapsin-1 (521 aa).

The first 17 residues, 1–17 (MRIWILIFFSFIKLVSS), serve as a signal peptide directing secretion. Topologically, residues 18-500 (LQYTGNGVLA…NAVANAGNSF (483 aa)) are extracellular. Residues 67-409 (YTTTLSIGRP…HQSQKMIAIG (343 aa)) form the Peptidase A1 domain. Residue D85 is part of the active site. Residues N136, N157, N250, N289, N295, N354, N414, N418, N460, and N484 are each glycosylated (N-linked (GlcNAc...) asparagine). Residues 501–521 (SPLSAMVIMMMSAVFLGLGII) form a helical membrane-spanning segment.

The protein belongs to the peptidase A1 family.

The protein localises to the endoplasmic reticulum membrane. Its subcellular location is the secreted. It localises to the cell wall. In terms of biological role, cleaves at paired basic residues. The polypeptide is Aspartic proteinase yapsin-1 (yps1) (Schizosaccharomyces pombe (strain 972 / ATCC 24843) (Fission yeast)).